The following is a 246-amino-acid chain: 1-(5-phosphoribosyl)-5-[(5-phosphoribosylamino)methylideneamino] imidazole-4-carboxamide isomerase (246 aa).

The active-site Proton acceptor is the Asp8. Asp130 serves as the catalytic Proton donor.

Belongs to the HisA/HisF family.

It is found in the cytoplasm. The catalysed reaction is 1-(5-phospho-beta-D-ribosyl)-5-[(5-phospho-beta-D-ribosylamino)methylideneamino]imidazole-4-carboxamide = 5-[(5-phospho-1-deoxy-D-ribulos-1-ylimino)methylamino]-1-(5-phospho-beta-D-ribosyl)imidazole-4-carboxamide. Its pathway is amino-acid biosynthesis; L-histidine biosynthesis; L-histidine from 5-phospho-alpha-D-ribose 1-diphosphate: step 4/9. The protein is 1-(5-phosphoribosyl)-5-[(5-phosphoribosylamino)methylideneamino] imidazole-4-carboxamide isomerase of Shigella dysenteriae serotype 1 (strain Sd197).